A 1704-amino-acid polypeptide reads, in one-letter code: Villidin (1704 aa).

WD repeat units follow at residues 82-122 (GHTD…LIKD), 133-173 (KQQK…EQSS), 180-221 (GHED…TPIQ), and 225-271 (THEG…SSQP). 2 disordered regions span residues 439–460 (IGNS…DSPF) and 606–721 (SVPS…NSST). The segment covering 442-456 (SGSGGGGGDGDGNGG) has biased composition (gly residues). The PH 1 domain maps to 459-563 (PFITEGIVKQ…WCQSINAYRE (105 aa)). 3 stretches are compositionally biased toward low complexity: residues 613–636 (QQQQ…TPTQ), 651–701 (SLKS…SSSS), and 709–721 (NNST…NSST). PH domains are found at residues 727–828 (DIVI…QNLK) and 871–969 (EQPL…AARK). Residues 848-877 (LISSPMSDDESNTNEGGVEEEEEEQPLEGQ) form a disordered region. A compositionally biased stretch (acidic residues) spans 854–873 (SDDESNTNEGGVEEEEEEQP). 5 Gelsolin-like repeats span residues 1025–1119 (KQKI…LGGN), 1138–1241 (IKTT…FANY), 1293–1390 (GRVK…FKTK), 1404–1494 (KKPS…FEST), and 1520–1615 (RFFV…FRAW). The 64-residue stretch at 1641-1704 (DYLKEIYTYE…EGIKKELFLF (64 aa)) folds into the HP domain.

Its subcellular location is the membrane. It localises to the cytoplasm. The protein resides in the cytoskeleton. Functionally, may function as a linker between membranes and the actin cytoskeleton. The sequence is that of Villidin (vilA) from Dictyostelium discoideum (Social amoeba).